The primary structure comprises 111 residues: Large ribosomal subunit protein P2-2 (111 aa).

Positions 86–111 (APAAAAAKKDEPEEEADDDMGFGLFD) are disordered.

This sequence belongs to the eukaryotic ribosomal protein P1/P2 family. P1 and P2 exist as dimers at the large ribosomal subunit. Phosphorylated.

Its function is as follows. Plays an important role in the elongation step of protein synthesis. This chain is Large ribosomal subunit protein P2-2 (LIP'), found in Leishmania infantum.